Here is a 236-residue protein sequence, read N- to C-terminus: Pyridoxine 5'-phosphate synthase (236 aa).

Asparagine 6 lines the 3-amino-2-oxopropyl phosphate pocket. 8-9 (DH) provides a ligand contact to 1-deoxy-D-xylulose 5-phosphate. Arginine 17 is a binding site for 3-amino-2-oxopropyl phosphate. The active-site Proton acceptor is the histidine 42. Positions 44 and 49 each coordinate 1-deoxy-D-xylulose 5-phosphate. Glutamate 69 acts as the Proton acceptor in catalysis. Threonine 99 contacts 1-deoxy-D-xylulose 5-phosphate. Catalysis depends on histidine 190, which acts as the Proton donor. 3-amino-2-oxopropyl phosphate contacts are provided by residues glycine 191 and 212 to 213 (GH).

This sequence belongs to the PNP synthase family. As to quaternary structure, homooctamer; tetramer of dimers.

The protein localises to the cytoplasm. The catalysed reaction is 3-amino-2-oxopropyl phosphate + 1-deoxy-D-xylulose 5-phosphate = pyridoxine 5'-phosphate + phosphate + 2 H2O + H(+). It participates in cofactor biosynthesis; pyridoxine 5'-phosphate biosynthesis; pyridoxine 5'-phosphate from D-erythrose 4-phosphate: step 5/5. In terms of biological role, catalyzes the complicated ring closure reaction between the two acyclic compounds 1-deoxy-D-xylulose-5-phosphate (DXP) and 3-amino-2-oxopropyl phosphate (1-amino-acetone-3-phosphate or AAP) to form pyridoxine 5'-phosphate (PNP) and inorganic phosphate. This Pelodictyon phaeoclathratiforme (strain DSM 5477 / BU-1) protein is Pyridoxine 5'-phosphate synthase.